The primary structure comprises 159 residues: 2-C-methyl-D-erythritol 2,4-cyclodiphosphate synthase (159 aa).

A divalent metal cation-binding residues include Asp8 and His10. 4-CDP-2-C-methyl-D-erythritol 2-phosphate-binding positions include Asp8–His10 and His34–Ser35. His42 provides a ligand contact to a divalent metal cation. Residues Asp56 to Gly58, Phe61 to Asp65, Ala100 to Leu106, Thr132 to Glu135, Phe139, and Arg142 each bind 4-CDP-2-C-methyl-D-erythritol 2-phosphate.

It belongs to the IspF family. As to quaternary structure, homotrimer. The cofactor is a divalent metal cation.

The catalysed reaction is 4-CDP-2-C-methyl-D-erythritol 2-phosphate = 2-C-methyl-D-erythritol 2,4-cyclic diphosphate + CMP. It participates in isoprenoid biosynthesis; isopentenyl diphosphate biosynthesis via DXP pathway; isopentenyl diphosphate from 1-deoxy-D-xylulose 5-phosphate: step 4/6. Functionally, involved in the biosynthesis of isopentenyl diphosphate (IPP) and dimethylallyl diphosphate (DMAPP), two major building blocks of isoprenoid compounds. Catalyzes the conversion of 4-diphosphocytidyl-2-C-methyl-D-erythritol 2-phosphate (CDP-ME2P) to 2-C-methyl-D-erythritol 2,4-cyclodiphosphate (ME-CPP) with a corresponding release of cytidine 5-monophosphate (CMP). This chain is 2-C-methyl-D-erythritol 2,4-cyclodiphosphate synthase, found in Salmonella typhi.